Reading from the N-terminus, the 311-residue chain is Methionyl-tRNA formyltransferase (311 aa).

110–113 (SLLP) provides a ligand contact to (6S)-5,6,7,8-tetrahydrofolate.

The protein belongs to the Fmt family.

The catalysed reaction is L-methionyl-tRNA(fMet) + (6R)-10-formyltetrahydrofolate = N-formyl-L-methionyl-tRNA(fMet) + (6S)-5,6,7,8-tetrahydrofolate + H(+). In terms of biological role, attaches a formyl group to the free amino group of methionyl-tRNA(fMet). The formyl group appears to play a dual role in the initiator identity of N-formylmethionyl-tRNA by promoting its recognition by IF2 and preventing the misappropriation of this tRNA by the elongation apparatus. The sequence is that of Methionyl-tRNA formyltransferase from Acidobacterium capsulatum (strain ATCC 51196 / DSM 11244 / BCRC 80197 / JCM 7670 / NBRC 15755 / NCIMB 13165 / 161).